Reading from the N-terminus, the 304-residue chain is Probable alpha-L-glutamate ligase 2 (304 aa).

Residues 107-290 form the ATP-grasp domain; that stretch reads HQLLARKGVG…IAGAIIDYIV (184 aa). ATP-binding positions include lysine 144, 181–182, aspartate 190, and 214–216; these read EF and RSN. 3 residues coordinate Mg(2+): aspartate 251, glutamate 263, and asparagine 265. Positions 251, 263, and 265 each coordinate Mn(2+).

It belongs to the RimK family. Mg(2+) is required as a cofactor. The cofactor is Mn(2+).

This chain is Probable alpha-L-glutamate ligase 2, found in Hahella chejuensis (strain KCTC 2396).